The primary structure comprises 434 residues: Adenylosuccinate synthetase (434 aa).

GTP contacts are provided by residues 12–18 (GDEGKGK) and 40–42 (GHT). The active-site Proton acceptor is aspartate 13. 2 residues coordinate Mg(2+): aspartate 13 and glycine 40. Residues 13-16 (DEGK), 38-41 (NAGH), threonine 129, arginine 143, glutamine 224, threonine 239, and arginine 303 each bind IMP. Histidine 41 (proton donor) is an active-site residue. 299–305 (AVTGRPR) contributes to the substrate binding site. GTP-binding positions include arginine 305, 331 to 333 (KLD), and 413 to 415 (STG).

The protein belongs to the adenylosuccinate synthetase family. Homodimer. Mg(2+) is required as a cofactor.

It localises to the cytoplasm. It carries out the reaction IMP + L-aspartate + GTP = N(6)-(1,2-dicarboxyethyl)-AMP + GDP + phosphate + 2 H(+). It functions in the pathway purine metabolism; AMP biosynthesis via de novo pathway; AMP from IMP: step 1/2. Its function is as follows. Plays an important role in the de novo pathway of purine nucleotide biosynthesis. Catalyzes the first committed step in the biosynthesis of AMP from IMP. In Solibacter usitatus (strain Ellin6076), this protein is Adenylosuccinate synthetase.